Here is a 39-residue protein sequence, read N- to C-terminus: Photosystem II reaction center protein J (39 aa).

The chain crosses the membrane as a helical span at residues 7 to 27 (IPLWLIATVGGTAALTVVGLF).

It belongs to the PsbJ family. In terms of assembly, PSII is composed of 1 copy each of membrane proteins PsbA, PsbB, PsbC, PsbD, PsbE, PsbF, PsbH, PsbI, PsbJ, PsbK, PsbL, PsbM, PsbT, PsbX, PsbY, PsbZ, Psb30/Ycf12, at least 3 peripheral proteins of the oxygen-evolving complex and a large number of cofactors. It forms dimeric complexes.

The protein resides in the plastid. Its subcellular location is the chloroplast thylakoid membrane. One of the components of the core complex of photosystem II (PSII). PSII is a light-driven water:plastoquinone oxidoreductase that uses light energy to abstract electrons from H(2)O, generating O(2) and a proton gradient subsequently used for ATP formation. It consists of a core antenna complex that captures photons, and an electron transfer chain that converts photonic excitation into a charge separation. In Rhodomonas salina (Cryptomonas salina), this protein is Photosystem II reaction center protein J.